Consider the following 154-residue polypeptide: MNIDTLIIAVAGLFAVASSIGVLLTKDNFYAALYMSVTMLFVAAIYAAFNIQPVVVIIALIFVGAVGIVTVAIAATYRAGVSRKVNIFWVVPVIVVFAILALAYASMAVESIEVVNPEVFSAVATDYFFVVAFLFTLVVLMMLSAIKLARRVDL.

The next 5 helical transmembrane spans lie at 5–24 (TLIIAVAGLFAVASSIGVLL), 29–48 (FYAALYMSVTMLFVAAIYAA), 53–75 (PVVVIIALIFVGAVGIVTVAIAA), 87–109 (IFWVVPVIVVFAILALAYASMAV), and 124–146 (ATDYFFVVAFLFTLVVLMMLSAI).

The protein localises to the cell membrane. This is an uncharacterized protein from Archaeoglobus fulgidus (strain ATCC 49558 / DSM 4304 / JCM 9628 / NBRC 100126 / VC-16).